Consider the following 666-residue polypeptide: Threonine--tRNA ligase (666 aa).

Residues 7 to 70 (QQVTLTVTLP…TADCTAEIIT (64 aa)) enclose the TGS domain. A catalytic region spans residues 253–555 (DHRKLGTELE…LIEHTAGNFP (303 aa)). Residues Cys351, His402, and His532 each contribute to the Zn(2+) site.

It belongs to the class-II aminoacyl-tRNA synthetase family. In terms of assembly, homodimer. Zn(2+) is required as a cofactor.

The protein resides in the cytoplasm. It carries out the reaction tRNA(Thr) + L-threonine + ATP = L-threonyl-tRNA(Thr) + AMP + diphosphate + H(+). Its function is as follows. Catalyzes the attachment of threonine to tRNA(Thr) in a two-step reaction: L-threonine is first activated by ATP to form Thr-AMP and then transferred to the acceptor end of tRNA(Thr). Also edits incorrectly charged L-seryl-tRNA(Thr). In Chlorobium phaeovibrioides (strain DSM 265 / 1930) (Prosthecochloris vibrioformis (strain DSM 265)), this protein is Threonine--tRNA ligase.